We begin with the raw amino-acid sequence, 316 residues long: Thiamine-monophosphate kinase (316 aa).

Mg(2+)-binding residues include Asp26, Thr49, and Asp50. Asp57 contacts substrate. Asp79 provides a ligand contact to Mg(2+). Residues Tyr109, 126–127, and Arg151 each bind ATP; that span reads GD. Residue Asp127 participates in Mg(2+) binding. Mg(2+) is bound at residue Asp198. Ser200 contributes to the ATP binding site. Asp201 provides a ligand contact to Mg(2+). 2 residues coordinate substrate: Glu251 and Phe305.

It belongs to the thiamine-monophosphate kinase family.

The catalysed reaction is thiamine phosphate + ATP = thiamine diphosphate + ADP. Its pathway is cofactor biosynthesis; thiamine diphosphate biosynthesis; thiamine diphosphate from thiamine phosphate: step 1/1. Its function is as follows. Catalyzes the ATP-dependent phosphorylation of thiamine-monophosphate (TMP) to form thiamine-pyrophosphate (TPP), the active form of vitamin B1. The chain is Thiamine-monophosphate kinase from Rhodopirellula baltica (strain DSM 10527 / NCIMB 13988 / SH1).